The following is a 231-amino-acid chain: uncharacterized protein (231 aa).

A helical transmembrane segment spans residues 10-30; it reads SQNIFFIAIVIFILSSVILYH.

The protein localises to the membrane. This is an uncharacterized protein from Rickettsia prowazekii (strain Madrid E).